The chain runs to 445 residues: Transcriptional enhancer factor TEF-4 (445 aa).

2 disordered regions span residues 1-47 and 191-217; these read MGDP…VWSP and PPAS…SPPA. Over residues 25–37 the composition is skewed to gly residues; sequence EGTGGSEGVGGDG. The TEA DNA-binding region spans 38-114; that stretch reads SPDAEGVWSP…QVLARRKSRE (77 aa). Positions 172–445 are transcriptional activation; sequence WNVPDVKPFS…QYHIYRLVRD (274 aa). The span at 199–216 shows a compositional bias: pro residues; that stretch reads YEPPPALSPLPPPAPSPP.

Interacts with YAP1 and WWTR1/TAZ. As to expression, highest expression in brain. High levels also found in lung, testis and ovarian follicle cells. Lower levels in heart and spleen.

It is found in the nucleus. Its function is as follows. Transcription factor which plays a key role in the Hippo signaling pathway, a pathway involved in organ size control and tumor suppression by restricting proliferation and promoting apoptosis. The core of this pathway is composed of a kinase cascade wherein MST1/MST2, in complex with its regulatory protein SAV1, phosphorylates and activates LATS1/2 in complex with its regulatory protein MOB1, which in turn phosphorylates and inactivates YAP1 oncoprotein and WWTR1/TAZ. Acts by mediating gene expression of YAP1 and WWTR1/TAZ, thereby regulating cell proliferation, migration and epithelial mesenchymal transition (EMT) induction. Binds to the SPH and GT-IIC 'enhansons' (5'-GTGGAATGT-3'). May be involved in the gene regulation of neural development. Binds to the M-CAT motif. This Mus musculus (Mouse) protein is Transcriptional enhancer factor TEF-4 (Tead2).